The sequence spans 311 residues: MQEIQKNTKKEQYNLNKLQKRLRRNVGEAIADFNMIEEGDRIMVCLSGGKDSYTMLEILRNLQQSAPINFSLVAVNLDQKQPGFPEHILPAYLEQLGVEYKIVEENTYGIVKEKIPEGKTTCSLCSRLRRGILYRTATELGATKIALGHHRDDILQTLFLNMFYGGKMKGMPPKLMSDDGKHIVIRPLAYCREKDIIRFAEAKAFPIIPCNLCGSQPNLQRQVIADMLRDWDKRYPGRIETMFSAMQNVVPSHLCDTNLFDFKGITHGSEVVDGGDLAFDREEIPLQPAGWQPEEDDTSVEALRLDVIEVK.

Residues 47–52 (SGGKDS) carry the PP-loop motif motif. 3 residues coordinate [4Fe-4S] cluster: C122, C125, and C213.

The protein belongs to the TtcA family. Homodimer. The cofactor is Mg(2+). Requires [4Fe-4S] cluster as cofactor.

The protein localises to the cytoplasm. It carries out the reaction cytidine(32) in tRNA + S-sulfanyl-L-cysteinyl-[cysteine desulfurase] + AH2 + ATP = 2-thiocytidine(32) in tRNA + L-cysteinyl-[cysteine desulfurase] + A + AMP + diphosphate + H(+). It participates in tRNA modification. Its function is as follows. Catalyzes the ATP-dependent 2-thiolation of cytidine in position 32 of tRNA, to form 2-thiocytidine (s(2)C32). The sulfur atoms are provided by the cysteine/cysteine desulfurase (IscS) system. In Salmonella paratyphi B (strain ATCC BAA-1250 / SPB7), this protein is tRNA-cytidine(32) 2-sulfurtransferase.